We begin with the raw amino-acid sequence, 554 residues long: Pigment biosynthesis transcriptional activator pigB (554 aa).

Residues 1-21 (MFTSSSPEQRKPRQSRQLPGA) are disordered. The zn(2)-C6 fungal-type DNA-binding region spans 23 to 40 (CEECRRKKLRCDRQQPQC).

It is found in the nucleus. In terms of biological role, transcription factor; part of the gene cluster that mediates the biosynthesis of azaphilone pigments (MonAzPs), a complex mixture of compounds with a common azaphilone skeleton very widely used as food colorants. Positively regulates the expression of the azaphilone pigments (MonAzPs) gene cluster. The sequence is that of Pigment biosynthesis transcriptional activator pigB from Monascus ruber (Mold).